The following is a 660-amino-acid chain: Probable Xaa-Pro aminopeptidase PTRG_10574 (660 aa).

Asp274, Asp285, Glu435, and Glu476 together coordinate Mn(2+). The tract at residues 641–660 (SAGSGSTPLWKPHNKQDKKN) is disordered.

This sequence belongs to the peptidase M24B family. It depends on Mn(2+) as a cofactor.

It catalyses the reaction Release of any N-terminal amino acid, including proline, that is linked to proline, even from a dipeptide or tripeptide.. Functionally, catalyzes the removal of a penultimate prolyl residue from the N-termini of peptides. The polypeptide is Probable Xaa-Pro aminopeptidase PTRG_10574 (Pyrenophora tritici-repentis (strain Pt-1C-BFP) (Wheat tan spot fungus)).